Consider the following 1354-residue polypeptide: MLIALFALAHLPIFRKTPLSASSSPPPSVHRSPRCGKASTAYHPPPADACISITASAIDAASGMSNSAEQDKPIAANGNAAEPQEIEVIHFQAQEKQCCRVIRSNKTKVLTSGGVHTRGSSKVKLKNIVDYKWERKYYYPGHLVAVHRDGKHLAYAINVNNKATGMEGMVRVCNIATSMRALIKGMSGEVLDLQFAHTDCERILAVIDVSSLFVYKVDQIEGNLLCNLVLKVEDPIANYVPEYDMVSWCPYVCSSSATVPINDDDDENQLLIWSRSSQFQCFQVKMIVSEHGRGKIQPAALESGYLKIEEDSLITCAALSPDGTTVAAACADGLVRFYQIYLFDVRNHRCLHEWKPHDGKKVCSLFFLDNINKPVEESYWQHVITTSDANTEIKLWNCSLWKCLQTINVVASPSSLQPRNFIAGIDRSANYLVLSCLDSLAVYVMQIGSTGGADSENRSSDSEGEGCDTSKRIQNVAEFKLSSGILSFSIVNASMRRVKNSIESYYPIEEPDDFDDDSNSTSALVLHMFVVQAKSLQECQIIYQPCVAEKTERSSLNSKRSQTPEDNLLIKEEPESPNSGTVGAVQLDALFAKSAKRASTGSSSAMVAVAAAAAAAPSAILQDATKEAAKSESPQLSSAYTQQVNLMTPDAFSASGTAAAAAVFVSTSTTTSIGTDSSTTTSGQDRSIDSAVLQTIRMLATVTSKTSENPNAEVLLNLMNNTLIEDREQQKLKEKLDARKKFIAIDRNPERNVAENLASGSSSPSREVQEIMATQDDADAYEAELENLDDDDDDEEEELANSSPLPEAVDGTWPIVKLSSHSAELQNAAQIMSQAVQNTNNGNVPPTLGGGHNNNTSVGSNSNNNTATTLSTSNTSSSNNAGGTCVDSSGTGELNAKMELLIDLVKAQSKQINKLENEVNKLQKQQEAAAALHSKQDTSLEPKNLSQLAYKIEMQLSKLMEQYLKRYENEHKKKLTEFLAARESQNRELRDSVLQVLNQYVMNHFTDIIGNVLNMELQRQLLPRVNANMDQLQAQMQVEIVQKLSVFDKTVKENIAQVCKSKQFLDTFGKSVLIGVQTSLQTAFIESMSSTLIPAYEKSSQNMFKQLHDAFSVGIKDFMVQFNTYLQHMPQPQAGSGNTEEINNKLSMLKQLVESSLHKHRTELTDAMLETQREVKSLEILLARQVQETIRAELRKHMEAQNVAMRSQAATPAPPYDLRDSIKQLLMAGQINKAFHQALLANDLGLVEFTLRHTDSNQAFAPEGCRLEQKVLLSLIQQISADMTNHNELKQRYLNEALLAINMADPITREHAPKVLTELYRNCQQFIKNSPKNSQFSNVRLLMKAIITYRDQLK.

Positions 18–38 are disordered; it reads PLSASSSPPPSVHRSPRCGKA. At Ser-32 the chain carries Phosphoserine. 2 WD repeats span residues 309–348 and 363–406; these read EEDS…VRNH and CSLF…CLQT. The segment at 552 to 581 is disordered; that stretch reads ERSSLNSKRSQTPEDNLLIKEEPESPNSGT. A compositionally biased stretch (polar residues) spans 554–565; that stretch reads SSLNSKRSQTPE. Residue Ser-561 is modified to Phosphoserine. At Thr-563 the chain carries Phosphothreonine. Position 576 is a phosphoserine (Ser-576). Thr-581 bears the Phosphothreonine mark. Phosphoserine is present on residues Ser-759, Ser-762, and Ser-763. Residues 765-803 are a coiled coil; it reads SREVQEIMATQDDADAYEAELENLDDDDDDEEEELANSS. Acidic residues predominate over residues 788–799; sequence LDDDDDDEEEEL. Disordered stretches follow at residues 788–811 and 838–884; these read LDDD…AVDG and NTNN…AGGT. Residues 853 to 884 show a composition bias toward low complexity; that stretch reads NNNTSVGSNSNNNTATTLSTSNTSSSNNAGGT. Coiled coils occupy residues 893–936, 969–1036, and 1159–1188; these read ELNA…HSKQ, NEHK…QAQM, and KHRT…QVQE. Ser-1207 is subject to Phosphoserine. 2 positions are modified to phosphothreonine: Thr-1211 and Thr-1317. The residue at position 1320 (Tyr-1320) is a Phosphotyrosine.

The protein belongs to the WD repeat EDC4 family. As to quaternary structure, homodimer. Interacts with Dcp1 and Dcp2. Interacts with Gyf.

Its subcellular location is the cytoplasm. The protein localises to the P-body. In the process of mRNA degradation, seems to play a role in mRNA decapping. Required for silencing a subset of endogenous miRNA targets. The sequence is that of Enhancer of mRNA-decapping protein 4 homolog (Ge-1) from Drosophila melanogaster (Fruit fly).